The primary structure comprises 247 residues: UPF0259 membrane protein BUsg_265 (247 aa).

Helical transmembrane passes span 20–40 (IKII…INVL), 82–102 (IFKI…IITL), 114–134 (IQFS…LNFI), 137–157 (FFIQ…SVLL), 188–208 (IVGT…TVFS), and 217–237 (FIFL…IVYL).

Belongs to the UPF0259 family.

It is found in the cell membrane. The chain is UPF0259 membrane protein BUsg_265 from Buchnera aphidicola subsp. Schizaphis graminum (strain Sg).